Reading from the N-terminus, the 462-residue chain is Jasmonoyl--L-amino acid synthetase GH3.3 (462 aa).

Ser-103 contributes to the ATP binding site. Position 106 (Ser-106) interacts with jasmonate. Residues Thr-126, Asn-172, and 337-342 (GASEGW) contribute to the ATP site. Position 170–174 (170–174 (TTNVY)) interacts with an L-alpha-amino acid. Residues 334-337 (AEYG) and Ser-339 each bind jasmonate.

This sequence belongs to the IAA-amido conjugating enzyme family. In terms of tissue distribution, expressed in green shoots and flowers.

The catalysed reaction is a jasmonate + an L-alpha-amino acid + ATP = a jasmonyl-L-amino acid + AMP + diphosphate + H(+). Functionally, catalyzes the synthesis of jasmonate-amino acid conjugates by adenylation. Catalyzes the conjugation of jasmonate (JA) to Ile when expressed in a heterologous system (E.coli). Catalyzes in vitro the conjugation of jasmonate (JA) to Ile, Phe, Leu, Met, Val and Trp. May catalyze the synthesis of indole-3-acetic acid (IAA)-amino acid conjugates, providing a mechanism for the plant to cope with the presence of excess auxin. In Oryza sativa subsp. japonica (Rice), this protein is Jasmonoyl--L-amino acid synthetase GH3.3.